The following is a 42-amino-acid chain: Large ribosomal subunit protein bL36 (42 aa).

Belongs to the bacterial ribosomal protein bL36 family.

The chain is Large ribosomal subunit protein bL36 from Wolbachia pipientis subsp. Culex pipiens (strain wPip).